Here is an 897-residue protein sequence, read N- to C-terminus: Protein translocase subunit SecA (897 aa).

ATP is bound by residues Gln87, 105–109 (GEGKT), and Asp512. Residues 846-897 (EEEQQKQARKKMVFNLVDEDETSEPSKSKKLAGRNEPCPCGSGKKYKKCCGK) are disordered. Residues Cys883, Cys885, Cys894, and Cys895 each coordinate Zn(2+).

The protein belongs to the SecA family. In terms of assembly, monomer and homodimer. Part of the essential Sec protein translocation apparatus which comprises SecA, SecYEG and auxiliary proteins SecDF-YajC and YidC. The cofactor is Zn(2+).

Its subcellular location is the cell inner membrane. The protein localises to the cytoplasm. It catalyses the reaction ATP + H2O + cellular proteinSide 1 = ADP + phosphate + cellular proteinSide 2.. In terms of biological role, part of the Sec protein translocase complex. Interacts with the SecYEG preprotein conducting channel. Has a central role in coupling the hydrolysis of ATP to the transfer of proteins into and across the cell membrane, serving as an ATP-driven molecular motor driving the stepwise translocation of polypeptide chains across the membrane. The chain is Protein translocase subunit SecA from Geobacter sulfurreducens (strain ATCC 51573 / DSM 12127 / PCA).